The sequence spans 431 residues: D-inositol 3-phosphate glycosyltransferase (431 aa).

A 1D-myo-inositol 3-phosphate-binding site is contributed by histidine 21. UDP-N-acetyl-alpha-D-glucosamine-binding positions include 27–28 and glycine 35; that span reads QP. 1D-myo-inositol 3-phosphate-binding positions include 32–37, arginine 90, tyrosine 123, threonine 147, and arginine 167; that span reads DAGGMN. Residues arginine 241, lysine 246, and glutamine 307 each contribute to the UDP-N-acetyl-alpha-D-glucosamine site. Residues tyrosine 316, arginine 317, and alanine 319 each coordinate Mg(2+). UDP-N-acetyl-alpha-D-glucosamine contacts are provided by glutamate 329 and glutamate 337. Position 343 (threonine 343) interacts with Mg(2+).

The protein belongs to the glycosyltransferase group 1 family. MshA subfamily. As to quaternary structure, homodimer.

It carries out the reaction 1D-myo-inositol 3-phosphate + UDP-N-acetyl-alpha-D-glucosamine = 1D-myo-inositol 2-acetamido-2-deoxy-alpha-D-glucopyranoside 3-phosphate + UDP + H(+). Catalyzes the transfer of a N-acetyl-glucosamine moiety to 1D-myo-inositol 3-phosphate to produce 1D-myo-inositol 2-acetamido-2-deoxy-glucopyranoside 3-phosphate in the mycothiol biosynthesis pathway. The polypeptide is D-inositol 3-phosphate glycosyltransferase (Saccharomonospora viridis (strain ATCC 15386 / DSM 43017 / JCM 3036 / CCUG 5913 / NBRC 12207 / NCIMB 9602 / P101) (Thermoactinomyces viridis)).